The chain runs to 156 residues: 6,7-dimethyl-8-ribityllumazine synthase (156 aa).

Residues F25, 59–61 (AWE), and 83–85 (AVI) contribute to the 5-amino-6-(D-ribitylamino)uracil site. 88–89 (ST) is a (2S)-2-hydroxy-3-oxobutyl phosphate binding site. H91 (proton donor) is an active-site residue. N116 is a 5-amino-6-(D-ribitylamino)uracil binding site. (2S)-2-hydroxy-3-oxobutyl phosphate is bound at residue R130.

Belongs to the DMRL synthase family. Forms an icosahedral capsid composed of 60 subunits, arranged as a dodecamer of pentamers.

It carries out the reaction (2S)-2-hydroxy-3-oxobutyl phosphate + 5-amino-6-(D-ribitylamino)uracil = 6,7-dimethyl-8-(1-D-ribityl)lumazine + phosphate + 2 H2O + H(+). It participates in cofactor biosynthesis; riboflavin biosynthesis; riboflavin from 2-hydroxy-3-oxobutyl phosphate and 5-amino-6-(D-ribitylamino)uracil: step 1/2. Functionally, catalyzes the formation of 6,7-dimethyl-8-ribityllumazine by condensation of 5-amino-6-(D-ribitylamino)uracil with 3,4-dihydroxy-2-butanone 4-phosphate. This is the penultimate step in the biosynthesis of riboflavin. This is 6,7-dimethyl-8-ribityllumazine synthase from Acinetobacter baumannii (strain AB0057).